A 487-amino-acid chain; its full sequence is Cytochrome P450 2C16 (487 aa).

A heme-binding site is contributed by Cys432.

It belongs to the cytochrome P450 family. The cofactor is heme. As to expression, expressed constitutively in liver, lung, testes, and kidney.

It is found in the endoplasmic reticulum membrane. The protein resides in the microsome membrane. The catalysed reaction is an organic molecule + reduced [NADPH--hemoprotein reductase] + O2 = an alcohol + oxidized [NADPH--hemoprotein reductase] + H2O + H(+). Cytochromes P450 are a group of heme-thiolate monooxygenases. In liver microsomes, this enzyme is involved in an NADPH-dependent electron transport pathway. It oxidizes a variety of structurally unrelated compounds, including steroids, fatty acids, and xenobiotics. The polypeptide is Cytochrome P450 2C16 (CYP2C16) (Oryctolagus cuniculus (Rabbit)).